The sequence spans 197 residues: ATP-dependent Clp protease proteolytic subunit (197 aa).

The Nucleophile role is filled by Ser98. His123 is an active-site residue.

The protein belongs to the peptidase S14 family. Fourteen ClpP subunits assemble into 2 heptameric rings which stack back to back to give a disk-like structure with a central cavity, resembling the structure of eukaryotic proteasomes.

It localises to the cytoplasm. It catalyses the reaction Hydrolysis of proteins to small peptides in the presence of ATP and magnesium. alpha-casein is the usual test substrate. In the absence of ATP, only oligopeptides shorter than five residues are hydrolyzed (such as succinyl-Leu-Tyr-|-NHMec, and Leu-Tyr-Leu-|-Tyr-Trp, in which cleavage of the -Tyr-|-Leu- and -Tyr-|-Trp bonds also occurs).. In terms of biological role, cleaves peptides in various proteins in a process that requires ATP hydrolysis. Has a chymotrypsin-like activity. Plays a major role in the degradation of misfolded proteins. This Pediococcus pentosaceus (strain ATCC 25745 / CCUG 21536 / LMG 10740 / 183-1w) protein is ATP-dependent Clp protease proteolytic subunit.